Here is a 910-residue protein sequence, read N- to C-terminus: Ubiquitin carboxyl-terminal hydrolase 9 (910 aa).

The 116-residue stretch at 19 to 134 folds into the DUSP domain; it reads TTPEEEKRIV…GGPPIERKLI (116 aa). The interval 68-89 is disordered; sequence ISGESSEASRPGPIDNHDIIES. One can recognise a USP domain in the interval 303 to 894; the sequence is AGLSNLGNTC…AAYVLFYRRV (592 aa). Catalysis depends on cysteine 312, which acts as the Nucleophile. The active-site Proton acceptor is the histidine 852.

Belongs to the peptidase C19 family.

The enzyme catalyses Thiol-dependent hydrolysis of ester, thioester, amide, peptide and isopeptide bonds formed by the C-terminal Gly of ubiquitin (a 76-residue protein attached to proteins as an intracellular targeting signal).. Recognizes and hydrolyzes the peptide bond at the C-terminal Gly of ubiquitin. Involved in the processing of poly-ubiquitin precursors as well as that of ubiquitinated proteins. This chain is Ubiquitin carboxyl-terminal hydrolase 9 (UBP9), found in Arabidopsis thaliana (Mouse-ear cress).